Reading from the N-terminus, the 184-residue chain is GTP cyclohydrolase 1 (184 aa).

Zn(2+) is bound by residues Cys-75, His-78, and Cys-146.

It belongs to the GTP cyclohydrolase I family. In terms of assembly, homomer.

The catalysed reaction is GTP + H2O = 7,8-dihydroneopterin 3'-triphosphate + formate + H(+). It functions in the pathway cofactor biosynthesis; 7,8-dihydroneopterin triphosphate biosynthesis; 7,8-dihydroneopterin triphosphate from GTP: step 1/1. This Finegoldia magna (strain ATCC 29328 / DSM 20472 / WAL 2508) (Peptostreptococcus magnus) protein is GTP cyclohydrolase 1.